The primary structure comprises 637 residues: MPNVKLPDGNVKHFEAPLTIYDVAHHISPGLAKAAIAGRVDGVLVDTSYLIKEDCSLIIVTEKHEDSLEIIRHSTAHLLAQAVKALFPSAQVTIGPVIEDGFYYDFAFERSFTPDDLSLIEAKMHELAKANLSITRRELPRNEAIQYFKSLGEEYKAKIIADIPENEALSLYRQGDFEDLCRGPHVPSTGFLKAFKLTKVAGAYWRGDSNNEMLQRIYGTAWADKKSLEEYLFRLEEAEKRDHRKLGKALDLFHFQDIAPGMVFWHPKGWTIYQELEHYMRNRLVDFGYQEIRTPQLVDRSLWEKSGHWANFRDEMFVTETENRHYAVKPMSCPCHVQIYNHGLKSYRDLPLRLSEFGNCHRCEPSGALHGLMRVRNMVQDDAHIFCTEDQIQSEVAMMLELVQSVYKDFGFTEIKYRLALRPEKRVGSDDVWDKAETALKLAMQGRNIEWVDAPGEGAFYGPKIECSLSDCLGRIWQCGTIQVDFSMPARLEASYVAEDGSKQTPVMLHRAILGSFERFMGILIEHYAGKLPLWLSPVQAVVLTISEKQNEYAEKVRKTLQKRGIRANFDLRNEKIGFKIREHTLQKIPYLLVVGDKEVENCQVAVRTRDGIDLGVMTIDTICDTLTQEIIRKGSI.

A TGS domain is found at 1 to 61 (MPNVKLPDGN…KEDCSLIIVT (61 aa)). Positions 242–533 (DHRKLGKALD…LIEHYAGKLP (292 aa)) are catalytic. Positions 333, 384, and 510 each coordinate Zn(2+).

Belongs to the class-II aminoacyl-tRNA synthetase family. Homodimer. Zn(2+) serves as cofactor.

Its subcellular location is the cytoplasm. It carries out the reaction tRNA(Thr) + L-threonine + ATP = L-threonyl-tRNA(Thr) + AMP + diphosphate + H(+). Functionally, catalyzes the attachment of threonine to tRNA(Thr) in a two-step reaction: L-threonine is first activated by ATP to form Thr-AMP and then transferred to the acceptor end of tRNA(Thr). Also edits incorrectly charged L-seryl-tRNA(Thr). The chain is Threonine--tRNA ligase from Legionella pneumophila (strain Corby).